Reading from the N-terminus, the 369-residue chain is Thyroid hormone receptor beta (369 aa).

The interval 1–14 (MSGYIPSYLDKDEL) is modulating. Positions 15, 18, 32, 35, 53, 59, 69, and 72 each coordinate Zn(2+). 2 consecutive NR C4-type zinc fingers follow at residues 15–35 (CVVCGDKATGYHYRCITCEGC) and 53–77 (CKYEGKCVIDKVTRNQCQECRFKKC). A DNA-binding region (nuclear receptor) is located at residues 15 to 89 (CVVCGDKATG…VGMATDLVLD (75 aa)). The region spanning 125–369 (EEWELIKIVT…PPLFLEVFED (245 aa)) is the NR LBD domain. 3,3',5-triiodo-L-thyronine contacts are provided by Arg190, Asn239, and His343. Residues Arg190, Asn239, and His343 each contribute to the L-thyroxine site.

This sequence belongs to the nuclear hormone receptor family. NR1 subfamily.

It localises to the nucleus. Nuclear hormone receptor that can act as a repressor or activator of transcription. High affinity receptor for thyroid hormones, including triiodothyronine and thyroxine. This chain is Thyroid hormone receptor beta (THRB), found in Cairina moschata (Muscovy duck).